The sequence spans 468 residues: Hydroxymethylglutaryl-CoA lyase, mitochondrial (468 aa).

Residues 168 to 435 enclose the Pyruvate carboxyltransferase domain; that stretch reads VKIVEVGPRD…HTNVDLGKLI (268 aa). Position 176 (Arg176) interacts with substrate. Residues Asp177, His368, and His370 each coordinate a divalent metal cation. Cys401 is a catalytic residue. Asn410 is an a divalent metal cation binding site.

The protein belongs to the HMG-CoA lyase family. As to quaternary structure, homodimer. It depends on a divalent metal cation as a cofactor.

The protein localises to the mitochondrion matrix. The catalysed reaction is (3S)-3-hydroxy-3-methylglutaryl-CoA = acetoacetate + acetyl-CoA. Its pathway is metabolic intermediate metabolism; (S)-3-hydroxy-3-methylglutaryl-CoA degradation; acetoacetate from (S)-3-hydroxy-3-methylglutaryl-CoA: step 1/1. Its function is as follows. Involved in the catabolism of branched amino acids such as leucine. This Arabidopsis thaliana (Mouse-ear cress) protein is Hydroxymethylglutaryl-CoA lyase, mitochondrial (HMGCL).